The chain runs to 344 residues: uncharacterized protein (344 aa).

Over residues 323 to 332 the composition is skewed to basic and acidic residues; it reads KQQEQREQGR. Positions 323–344 are disordered; the sequence is KQQEQREQGRRAAYLQQRGMER.

This is an uncharacterized protein from Bacillus anthracis.